The primary structure comprises 386 residues: MTIIVDYRFPPAINAEKQAKTIAIGQTAGTWSERHSHRQEQLQQHLGEVVGIREEADGYKVARVRFPQINVENDIASLLTMIFGKYSMAGAGKVVGVYLPETYGTKAKVGITGIRQRLGVYDRPLVMAIFKPALGLSAQDHADILREVAFAGLDVIKDDEIMADLPVAPTHERLDCCRLVLEEVRQQTGRNVLYAVNVTGKADELQRKARLLVKHGANALLLNVLTYGFSVLEALASDPAIDVPIFAHPAFAGAMCAGSDTGLAYSVVLGTMMAHAGADAVLYPAAYGSLPFDPQEEGKIRDILRDRNVFPVPSAGIRPGIVPQVLGDYGRNVILNAGTGIMDHPSGPASGVRAFFEALARIEAGDSFDPANLPEGALKQAILEWG.

Lys85 functions as the Proton acceptor in the catalytic mechanism. Substrate-binding positions include Lys131, Lys157 to Glu160, His248, Gly316, and Gly338 to Thr339. Lys157, Asp159, and Glu160 together coordinate Mg(2+). Lys157 is subject to N6-carboxylysine.

The protein belongs to the RuBisCO large chain family. Type IV subfamily. Homodimer. Mg(2+) is required as a cofactor.

The enzyme catalyses 5-methylsulfanyl-2,3-dioxopentyl phosphate = 2-hydroxy-5-methylsulfanyl-3-oxopent-1-enyl phosphate. Its pathway is amino-acid biosynthesis; L-methionine biosynthesis via salvage pathway; L-methionine from S-methyl-5-thio-alpha-D-ribose 1-phosphate: step 3/6. Catalyzes the enolization of 2,3-diketo-5-methylthiopentyl-1-phosphate (DK-MTP-1-P) into 2-hydroxy-3-keto-5-methylthiopentenyl-1-phosphate (HK-MTPenyl-1-P). This chain is 2,3-diketo-5-methylthiopentyl-1-phosphate enolase, found in Microcystis aeruginosa (strain NIES-843 / IAM M-2473).